The primary structure comprises 1001 residues: Protein MEI2-like 4 (1001 aa).

The segment at 100–120 (HANLPPSPWRPDQETGRQTDS) is disordered. 2 RRM domains span residues 275 to 348 (RTLF…YSIP) and 360 to 433 (GTIV…TSRL). 2 disordered regions span residues 767–815 (GGPS…KKQY) and 941–1001 (FHSD…PAKD). Residues 793–803 (PGERMRSRRND) show a composition bias toward basic and acidic residues. The segment covering 978 to 994 (DISITSVNCDTSTNGVD) has biased composition (polar residues).

Functionally, probable RNA-binding protein that may play a role in growth regulation. This Oryza sativa subsp. japonica (Rice) protein is Protein MEI2-like 4 (ML4).